The chain runs to 215 residues: High frequency lysogenization protein HflD homolog (215 aa).

The protein belongs to the HflD family.

Its subcellular location is the cytoplasm. It is found in the cell inner membrane. The protein is High frequency lysogenization protein HflD homolog of Haemophilus ducreyi (strain 35000HP / ATCC 700724).